The following is a 134-amino-acid chain: Large ribosomal subunit protein eL14y (134 aa).

It belongs to the eukaryotic ribosomal protein eL14 family.

In Arabidopsis thaliana (Mouse-ear cress), this protein is Large ribosomal subunit protein eL14y (RPL14B).